The sequence spans 390 residues: Digeranylgeranylglycerophospholipid reductase (390 aa).

FAD is bound by residues A18, E37, C48, A49, A51, R98, V122, D278, G290, and I291. Position 368 (V368) interacts with a 2,3-bis-O-(geranylgeranyl)-sn-glycerol 1-phospholipid.

Belongs to the geranylgeranyl reductase family. DGGGPL reductase subfamily. The cofactor is FAD.

It carries out the reaction a 2,3-bis-O-phytanyl-sn-glycerol 1-phospholipid + 8 A = a 2,3-bis-O-(geranylgeranyl)-sn-glycerol 1-phospholipid + 8 AH2. The enzyme catalyses 2,3-bis-O-(phytanyl)-sn-glycerol 1-phosphate + 8 A = 2,3-bis-O-(geranylgeranyl)-sn-glycerol 1-phosphate + 8 AH2. It catalyses the reaction CDP-2,3-bis-O-(geranylgeranyl)-sn-glycerol + 8 AH2 = CDP-2,3-bis-O-(phytanyl)-sn-glycerol + 8 A. The catalysed reaction is archaetidylserine + 8 AH2 = 2,3-bis-O-phytanyl-sn-glycero-3-phospho-L-serine + 8 A. It participates in membrane lipid metabolism; glycerophospholipid metabolism. Its function is as follows. Is involved in the reduction of 2,3-digeranylgeranylglycerophospholipids (unsaturated archaeols) into 2,3-diphytanylglycerophospholipids (saturated archaeols) in the biosynthesis of archaeal membrane lipids. Catalyzes the formation of archaetidic acid (2,3-di-O-phytanyl-sn-glyceryl phosphate) from 2,3-di-O-geranylgeranylglyceryl phosphate (DGGGP) via the hydrogenation of each double bond of the isoprenoid chains. Is also probably able to reduce double bonds of geranyl groups in CDP-2,3-bis-O-(geranylgeranyl)-sn-glycerol and archaetidylserine, thus acting at various stages in the biosynthesis of archaeal membrane lipids. This chain is Digeranylgeranylglycerophospholipid reductase, found in Methanococcus maripaludis (strain C7 / ATCC BAA-1331).